A 280-amino-acid chain; its full sequence is Energy-coupling factor transporter ATP-binding protein EcfA2 (280 aa).

The ABC transporter domain maps to 3–245 (INLQNVSYTY…VSLLEKKQLG (243 aa)). 40–47 (GHTGSGKS) serves as a coordination point for ATP.

This sequence belongs to the ABC transporter superfamily. Energy-coupling factor EcfA family. In terms of assembly, forms a stable energy-coupling factor (ECF) transporter complex composed of 2 membrane-embedded substrate-binding proteins (S component), 2 ATP-binding proteins (A component) and 2 transmembrane proteins (T component).

The protein localises to the cell membrane. In terms of biological role, ATP-binding (A) component of a common energy-coupling factor (ECF) ABC-transporter complex. Unlike classic ABC transporters this ECF transporter provides the energy necessary to transport a number of different substrates. The chain is Energy-coupling factor transporter ATP-binding protein EcfA2 from Streptococcus pyogenes serotype M28 (strain MGAS6180).